The primary structure comprises 303 residues: Glycine--tRNA ligase alpha subunit (303 aa).

It belongs to the class-II aminoacyl-tRNA synthetase family. In terms of assembly, tetramer of two alpha and two beta subunits.

It is found in the cytoplasm. The catalysed reaction is tRNA(Gly) + glycine + ATP = glycyl-tRNA(Gly) + AMP + diphosphate. In Bordetella pertussis (strain Tohama I / ATCC BAA-589 / NCTC 13251), this protein is Glycine--tRNA ligase alpha subunit.